Here is an 88-residue protein sequence, read N- to C-terminus: MLATEKKQELIDQYKRHEGDTGSPEVQIALLSERITYLTEHFRTHKKDHHSRRGLLKIVGQRRRLLDYLKSNDVERYRAIIKSLGIRR.

Basic and acidic residues predominate over residues Met-1–Asp-20. Positions Met-1–Thr-21 are disordered.

This sequence belongs to the universal ribosomal protein uS15 family. In terms of assembly, part of the 30S ribosomal subunit. Forms a bridge to the 50S subunit in the 70S ribosome, contacting the 23S rRNA.

Its function is as follows. One of the primary rRNA binding proteins, it binds directly to 16S rRNA where it helps nucleate assembly of the platform of the 30S subunit by binding and bridging several RNA helices of the 16S rRNA. In terms of biological role, forms an intersubunit bridge (bridge B4) with the 23S rRNA of the 50S subunit in the ribosome. The sequence is that of Small ribosomal subunit protein uS15 from Syntrophotalea carbinolica (strain DSM 2380 / NBRC 103641 / GraBd1) (Pelobacter carbinolicus).